The primary structure comprises 424 residues: 23S rRNA (uracil(1939)-C(5))-methyltransferase RlmD (424 aa).

In terms of domain architecture, TRAM spans 1–56 (MEKFPAVTVFDLDYQGRGVAKIDGQVVFIEGALPDETVTFCKTSAKKQFIEAVVDE). Cys-69, Cys-75, Cys-78, and Cys-155 together coordinate [4Fe-4S] cluster. S-adenosyl-L-methionine contacts are provided by Gln-255, Phe-284, Asn-289, Glu-305, Asp-333, and Asp-354. Cys-380 acts as the Nucleophile in catalysis.

It belongs to the class I-like SAM-binding methyltransferase superfamily. RNA M5U methyltransferase family. RlmD subfamily.

It catalyses the reaction uridine(1939) in 23S rRNA + S-adenosyl-L-methionine = 5-methyluridine(1939) in 23S rRNA + S-adenosyl-L-homocysteine + H(+). Its function is as follows. Catalyzes the formation of 5-methyl-uridine at position 1939 (m5U1939) in 23S rRNA. In Dichelobacter nodosus (strain VCS1703A), this protein is 23S rRNA (uracil(1939)-C(5))-methyltransferase RlmD.